Reading from the N-terminus, the 147-residue chain is MKIIIQRVKKAQVSIEGQIQGKINQGFLLLVGVGPEDQEEDLDYAVRKLVNMRIFSDAEGKMNLSVKDIEGEILSISQFTLFADTKKGNRPAFTGAAKPDMASDFYDAFNQKLAQEVPVQTGIFGADMQVELVNNGPVTIILDTKKR.

A Gly-cisPro motif, important for rejection of L-amino acids motif is present at residues 136–137 (GP).

This sequence belongs to the DTD family. In terms of assembly, homodimer.

It localises to the cytoplasm. It carries out the reaction glycyl-tRNA(Ala) + H2O = tRNA(Ala) + glycine + H(+). The enzyme catalyses a D-aminoacyl-tRNA + H2O = a tRNA + a D-alpha-amino acid + H(+). An aminoacyl-tRNA editing enzyme that deacylates mischarged D-aminoacyl-tRNAs. Also deacylates mischarged glycyl-tRNA(Ala), protecting cells against glycine mischarging by AlaRS. Acts via tRNA-based rather than protein-based catalysis; rejects L-amino acids rather than detecting D-amino acids in the active site. By recycling D-aminoacyl-tRNA to D-amino acids and free tRNA molecules, this enzyme counteracts the toxicity associated with the formation of D-aminoacyl-tRNA entities in vivo and helps enforce protein L-homochirality. This Streptococcus pneumoniae (strain P1031) protein is D-aminoacyl-tRNA deacylase.